A 403-amino-acid chain; its full sequence is Peroxisomal membrane protein PEX13 (403 aa).

A compositionally biased stretch (pro residues) spans 1–11; that stretch reads MASQPPPPPKP. Residues 1–68 are disordered; sequence MASQPPPPPK…PSQQTGSSSV (68 aa). Residues 1-134 are Peroxisomal matrix-facing; it reads MASQPPPPPK…SSRGAFQSIE (134 aa). Over residues 59-68 the composition is skewed to polar residues; that stretch reads PSQQTGSSSV. The chain crosses the membrane as a helical span at residues 135 to 155; the sequence is SIVHAFASVSMMMDATFSAVY. The targeting to peroxisomes stretch occupies residues 145 to 233; that stretch reads MMMDATFSAV…EDRAATSAKS (89 aa). Residues 156 to 174 are Cytoplasmic-facing; the sequence is NSFRAVLDVANHFSRLKIH. Residues 175–192 form a helical membrane-spanning segment; the sequence is FTKVFSAFALVRTIRYLY. Positions 175–196 are interaction with PEX19; the sequence is FTKVFSAFALVRTIRYLYRRLQ. At 193–233 the chain is on the peroxisomal matrix side; it reads RRLQRMLGLRRGSENEDLWAESEGTVACLGAEDRAATSAKS. The chain crosses the membrane as a helical span at residues 234–254; that stretch reads WPIFLFFAVILGGPYLIWKLL. At 255–403 the chain is on the cytoplasmic side; the sequence is STHSDEVTDS…IGKDGEKQDL (149 aa). The SH3 domain maps to 272-336; that stretch reads DDHVVARAEY…PANYVKILGK (65 aa). Phosphoserine is present on S354.

Belongs to the peroxin-13 family. Interacts (via SH3 domain) with PEX14 (via SH3-binding motif); forming the PEX13-PEX14 docking complex. Interacts with PEX19.

The protein localises to the peroxisome membrane. Functionally, component of the PEX13-PEX14 docking complex, a translocon channel that specifically mediates the import of peroxisomal cargo proteins bound to PEX5 receptor. The PEX13-PEX14 docking complex forms a large import pore which can be opened to a diameter of about 9 nm. Mechanistically, PEX5 receptor along with cargo proteins associates with the PEX14 subunit of the PEX13-PEX14 docking complex in the cytosol, leading to the insertion of the receptor into the organelle membrane with the concomitant translocation of the cargo into the peroxisome matrix. Involved in the import of PTS1- and PTS2-type containing proteins. This chain is Peroxisomal membrane protein PEX13, found in Homo sapiens (Human).